A 591-amino-acid polypeptide reads, in one-letter code: Oxaloacetate decarboxylase alpha chain (591 aa).

The region spanning 3–263 is the Pyruvate carboxyltransferase domain; the sequence is IAITDVVLRD…DTGLDILKLE (261 aa). The Biotinyl-binding domain maps to 518 to 591; the sequence is PAGAGTPVTA…SVGDTLMTLA (74 aa). Lysine 557 bears the N6-biotinyllysine mark.

In terms of assembly, composed of three chains (alpha, beta, and gamma). Biotin serves as cofactor.

The enzyme catalyses oxaloacetate + 2 Na(+)(in) + H(+) = pyruvate + 2 Na(+)(out) + CO2. Its function is as follows. Catalyzes the decarboxylation of oxaloacetate coupled to Na(+) translocation. The polypeptide is Oxaloacetate decarboxylase alpha chain (oadA1) (Salmonella typhimurium (strain LT2 / SGSC1412 / ATCC 700720)).